Consider the following 36-residue polypeptide: Potassium channel toxin alpha-KTx 2.7 (36 aa).

3 cysteine pairs are disulfide-bonded: Cys-7-Cys-29, Cys-13-Cys-34, and Cys-17-Cys-36.

Belongs to the short scorpion toxin superfamily. Potassium channel inhibitor family. Alpha-KTx 02 subfamily. Expressed by the venom gland.

The protein resides in the secreted. Inhibitor of voltage-gated potassium channels (Kv). This protein is capable of displacing the binding of radio-labeled noxiustoxin (AC P08815) to rat brain synaptosomes with high affinity (about 100 pM). It is also capable of inhibiting transient potassium-currents (resembling I(A)-type currents), in cultured rat cerebellar granule cells. About 50% of the peak currents are reduced by application of a 1.5 uM solution of this toxin. Is lethal to mice (when less than 100 ug are injected). In Centruroides limpidus (Mexican scorpion), this protein is Potassium channel toxin alpha-KTx 2.7.